We begin with the raw amino-acid sequence, 402 residues long: Queuine tRNA-ribosyltransferase-like protein (402 aa).

This sequence belongs to the queuine tRNA-ribosyltransferase family.

This is Queuine tRNA-ribosyltransferase-like protein from Theileria parva (East coast fever infection agent).